A 28-amino-acid chain; its full sequence is Dolichyl-diphosphooligosaccharide--protein glycosyltransferase subunit 1 (28 aa).

The protein belongs to the OST1 family. Component of the oligosaccharyltransferase (OST) complex.

It localises to the endoplasmic reticulum membrane. It participates in protein modification; protein glycosylation. Its function is as follows. Subunit of the oligosaccharyl transferase (OST) complex that catalyzes the initial transfer of a defined glycan (Glc(3)Man(9)GlcNAc(2) in eukaryotes) from the lipid carrier dolichol-pyrophosphate to an asparagine residue within an Asn-X-Ser/Thr consensus motif in nascent polypeptide chains, the first step in protein N-glycosylation. N-glycosylation occurs cotranslationally and the complex associates with the Sec61 complex at the channel-forming translocon complex that mediates protein translocation across the endoplasmic reticulum (ER). All subunits are required for a maximal enzyme activity. The protein is Dolichyl-diphosphooligosaccharide--protein glycosyltransferase subunit 1 of Gallus gallus (Chicken).